A 178-amino-acid polypeptide reads, in one-letter code: Probable chorismate pyruvate-lyase (178 aa).

Positions 72, 110, and 169 each coordinate substrate.

Belongs to the UbiC family.

The protein localises to the cytoplasm. The enzyme catalyses chorismate = 4-hydroxybenzoate + pyruvate. It participates in cofactor biosynthesis; ubiquinone biosynthesis. Functionally, removes the pyruvyl group from chorismate, with concomitant aromatization of the ring, to provide 4-hydroxybenzoate (4HB) for the ubiquinone pathway. The polypeptide is Probable chorismate pyruvate-lyase (Nitrosomonas eutropha (strain DSM 101675 / C91 / Nm57)).